We begin with the raw amino-acid sequence, 359 residues long: Phospho-N-acetylmuramoyl-pentapeptide-transferase (359 aa).

Transmembrane regions (helical) follow at residues 3 to 23, 55 to 75, 80 to 100, 117 to 137, 156 to 176, 187 to 207, 231 to 251, 255 to 275, 280 to 300, and 334 to 354; these read QILIAVAIALTVSILLTPALI, VAIIAGIWAGYLGTHLAGLAF, ISASGLLVLSLATVLGIVGFL, TAKTIGQVAAAVLFGVLALGF, IATVTLAPGLFVLFCVVVVSA, LDGLAAGSMAMVTAAYVLITF, LAIVAAATAGACIGFLWWNAA, IFMGDTGSLALGGIIAGISVT, ILAVVLGSLFVAEVSSVVLQI, and FWLLTAIACGLGVALFYGEWL.

The protein belongs to the glycosyltransferase 4 family. MraY subfamily. Mg(2+) serves as cofactor.

Its subcellular location is the cell membrane. The catalysed reaction is UDP-N-acetyl-alpha-D-muramoyl-L-alanyl-gamma-D-glutamyl-meso-2,6-diaminopimeloyl-D-alanyl-D-alanine + di-trans,octa-cis-undecaprenyl phosphate = di-trans,octa-cis-undecaprenyl diphospho-N-acetyl-alpha-D-muramoyl-L-alanyl-D-glutamyl-meso-2,6-diaminopimeloyl-D-alanyl-D-alanine + UMP. It functions in the pathway cell wall biogenesis; peptidoglycan biosynthesis. Its function is as follows. Catalyzes the initial step of the lipid cycle reactions in the biosynthesis of the cell wall peptidoglycan: transfers peptidoglycan precursor phospho-MurNAc-pentapeptide from UDP-MurNAc-pentapeptide onto the lipid carrier undecaprenyl phosphate, yielding undecaprenyl-pyrophosphoryl-MurNAc-pentapeptide, known as lipid I. The sequence is that of Phospho-N-acetylmuramoyl-pentapeptide-transferase from Mycobacterium avium (strain 104).